The chain runs to 135 residues: 2-iminobutanoate/2-iminopropanoate deaminase (135 aa).

Ser2 is modified (N-acetylserine). Residues Lys13, Lys60, Lys67, and Lys134 each carry the N6-succinyllysine modification.

It belongs to the RutC family. Homotrimer. Interacts with YTHDF2. Expressed predominantly in liver and kidney. Lower levels in lung and brain.

Its subcellular location is the cytoplasm. It is found in the nucleus. The protein localises to the peroxisome. The protein resides in the mitochondrion. The catalysed reaction is 2-iminobutanoate + H2O = 2-oxobutanoate + NH4(+). It catalyses the reaction 2-iminopropanoate + H2O = pyruvate + NH4(+). Catalyzes the hydrolytic deamination of enamine/imine intermediates that form during the course of normal metabolism. May facilitate the release of ammonia from these potentially toxic reactive metabolites, reducing their impact on cellular components. It may act on enamine/imine intermediates formed by several types of pyridoxal-5'-phosphate-dependent dehydratases including L-threonine dehydratase. In terms of biological role, also promotes endoribonucleolytic cleavage of some transcripts by promoting recruitment of the ribonuclease P/MRP complex. Acts by bridging YTHDF2 and the ribonuclease P/MRP complex. RIDA/HRSP12 binds to N6-methyladenosine (m6A)-containing mRNAs containing a 5'-GGUUC-3' motif: cooperative binding of RIDA/HRSP12 and YTHDF2 to such transcripts lead to recruitment of the ribonuclease P/MRP complex and subsequent endoribonucleolytic cleavage. This chain is 2-iminobutanoate/2-iminopropanoate deaminase, found in Mus musculus (Mouse).